Reading from the N-terminus, the 301-residue chain is GTPase Era (301 aa).

The 170-residue stretch at 4-173 folds into the Era-type G domain; sequence KAGFVALIGK…LECISKHLSP (170 aa). The tract at residues 12–19 is G1; that stretch reads GKPNAGKS. 12 to 19 lines the GTP pocket; the sequence is GKPNAGKS. The G2 stretch occupies residues 38–42; sequence NATRK. The tract at residues 64–67 is G3; that stretch reads DTPG. GTP is bound by residues 64-68 and 122-125; these read DTPGL and SKID. The G4 stretch occupies residues 122–125; it reads SKID. The interval 152 to 154 is G5; that stretch reads LSA. In terms of domain architecture, KH type-2 spans 204 to 280; the sequence is LSDEIPYESD…FLNLQVIAQK (77 aa).

It belongs to the TRAFAC class TrmE-Era-EngA-EngB-Septin-like GTPase superfamily. Era GTPase family. As to quaternary structure, monomer.

It is found in the cytoplasm. The protein resides in the cell inner membrane. An essential GTPase that binds both GDP and GTP, with rapid nucleotide exchange. Plays a role in 16S rRNA processing and 30S ribosomal subunit biogenesis and possibly also in cell cycle regulation and energy metabolism. This is GTPase Era from Helicobacter pylori (strain Shi470).